The sequence spans 383 residues: Acetylornithine deacetylase (383 aa).

Residue histidine 80 coordinates Zn(2+). Aspartate 82 is a catalytic residue. Residue aspartate 112 coordinates Zn(2+). The active site involves glutamate 144. Zn(2+)-binding residues include glutamate 145, glutamate 169, and histidine 355.

It belongs to the peptidase M20A family. ArgE subfamily. In terms of assembly, homodimer. It depends on Zn(2+) as a cofactor. Co(2+) serves as cofactor. The cofactor is glutathione.

Its subcellular location is the cytoplasm. The catalysed reaction is N(2)-acetyl-L-ornithine + H2O = L-ornithine + acetate. The protein operates within amino-acid biosynthesis; L-arginine biosynthesis; L-ornithine from N(2)-acetyl-L-ornithine (linear): step 1/1. Catalyzes the hydrolysis of the amide bond of N(2)-acetylated L-amino acids. Cleaves the acetyl group from N-acetyl-L-ornithine to form L-ornithine, an intermediate in L-arginine biosynthesis pathway, and a branchpoint in the synthesis of polyamines. The protein is Acetylornithine deacetylase of Escherichia coli O17:K52:H18 (strain UMN026 / ExPEC).